A 270-amino-acid chain; its full sequence is Diaminopimelate epimerase (270 aa).

3 residues coordinate substrate: Asn-15, Gln-49, and Asn-66. Catalysis depends on Cys-75, which acts as the Proton donor. Residues 76–77, Asn-155, Asn-187, and 204–205 contribute to the substrate site; these read GN and ER. Residue Cys-213 is the Proton acceptor of the active site. 214 to 215 contributes to the substrate binding site; the sequence is GS.

The protein belongs to the diaminopimelate epimerase family. In terms of assembly, homodimer.

The protein resides in the cytoplasm. It catalyses the reaction (2S,6S)-2,6-diaminopimelate = meso-2,6-diaminopimelate. Its pathway is amino-acid biosynthesis; L-lysine biosynthesis via DAP pathway; DL-2,6-diaminopimelate from LL-2,6-diaminopimelate: step 1/1. Functionally, catalyzes the stereoinversion of LL-2,6-diaminopimelate (L,L-DAP) to meso-diaminopimelate (meso-DAP), a precursor of L-lysine and an essential component of the bacterial peptidoglycan. The sequence is that of Diaminopimelate epimerase from Rickettsia akari (strain Hartford).